A 258-amino-acid polypeptide reads, in one-letter code: Cytochrome b-c1 complex subunit Rieske-1, mitochondrial (258 aa).

The transit peptide at 1–46 directs the protein to the mitochondrion; that stretch reads WPVRSAAPSSSAFISANHFSSDDDSSSPRSISPSLASVFLHHTRGF. The Mitochondrial matrix segment spans residues 47–95; the sequence is SSNSVSPAHDMGLVPDLPPTVAAIKNPTSKIVYDEHNHERYPPGDPSKR. Residues 96–118 traverse the membrane as a helical segment; it reads AFAYFVLTGGRFVYASLMRLLIL. Residues 119 to 258 are Mitochondrial intermembrane-facing; it reads KFVLSMSASK…FLEENKLLIG (140 aa). The Rieske domain maps to 161 to 256; the sequence is RRRTEDDISL…YSFLEENKLL (96 aa). Residues Cys-201, His-203, Cys-220, and His-223 each contribute to the [2Fe-2S] cluster site. A disulfide bridge links Cys-206 with Cys-222.

It belongs to the Rieske iron-sulfur protein family. As to quaternary structure, component of the ubiquinol-cytochrome c oxidoreductase (cytochrome b-c1 complex, complex III, CIII), a multisubunit enzyme composed of 3 respiratory subunits cytochrome b, cytochrome c1 and Rieske protein, 2 core protein subunits, and several low-molecular weight protein subunits. The complex exists as an obligatory dimer and forms supercomplexes (SCs) in the inner mitochondrial membrane with cytochrome c oxidase (complex IV, CIV). [2Fe-2S] cluster is required as a cofactor.

The protein resides in the mitochondrion inner membrane. The enzyme catalyses a quinol + 2 Fe(III)-[cytochrome c](out) = a quinone + 2 Fe(II)-[cytochrome c](out) + 2 H(+)(out). Component of the ubiquinol-cytochrome c oxidoreductase, a multisubunit transmembrane complex that is part of the mitochondrial electron transport chain which drives oxidative phosphorylation. The respiratory chain contains 3 multisubunit complexes succinate dehydrogenase (complex II, CII), ubiquinol-cytochrome c oxidoreductase (cytochrome b-c1 complex, complex III, CIII) and cytochrome c oxidase (complex IV, CIV), that cooperate to transfer electrons derived from NADH and succinate to molecular oxygen, creating an electrochemical gradient over the inner membrane that drives transmembrane transport and the ATP synthase. The cytochrome b-c1 complex catalyzes electron transfer from ubiquinol to cytochrome c, linking this redox reaction to translocation of protons across the mitochondrial inner membrane, with protons being carried across the membrane as hydrogens on the quinol. In the process called Q cycle, 2 protons are consumed from the matrix, 4 protons are released into the intermembrane space and 2 electrons are passed to cytochrome c. The Rieske protein is a catalytic core subunit containing a [2Fe-2S] iron-sulfur cluster. It cycles between 2 conformational states during catalysis to transfer electrons from the quinol bound in the Q(0) site in cytochrome b to cytochrome c1. This chain is Cytochrome b-c1 complex subunit Rieske-1, mitochondrial, found in Nicotiana tabacum (Common tobacco).